The following is a 345-amino-acid chain: NADH-ubiquinone oxidoreductase chain 2 (345 aa).

The next 10 helical transmembrane spans lie at 1–21 (MNPITLAIIYFTIFLGPVITM), 25–45 (NLMLMWVGLEFSLLAIIPMLI), 56–76 (ATKYFVTQATASMIILLAIVL), 92–114 (GLILNMTLMALSMKLGLAPFHFW), 149–171 (LNSTIILMLAITSIFMGAWGGLN), 178–198 (IMAYSSIAHMGWMLAILPYNP), 200–220 (LTLLNLMIYIILTAPMFMALM), 241–261 (LTMISLMLLSLGGLPPLTGFL), 274–294 (NCLIMATLMAMMALLNLFFYT), and 324–344 (LMFSTLAIMSTMTLPLAPQLI).

It belongs to the complex I subunit 2 family. Core subunit of respiratory chain NADH dehydrogenase (Complex I) which is composed of 45 different subunits. Interacts with TMEM242.

The protein localises to the mitochondrion inner membrane. It carries out the reaction a ubiquinone + NADH + 5 H(+)(in) = a ubiquinol + NAD(+) + 4 H(+)(out). Its function is as follows. Core subunit of the mitochondrial membrane respiratory chain NADH dehydrogenase (Complex I) which catalyzes electron transfer from NADH through the respiratory chain, using ubiquinone as an electron acceptor. Essential for the catalytic activity and assembly of complex I. The chain is NADH-ubiquinone oxidoreductase chain 2 from Mus musculus (Mouse).